Here is a 477-residue protein sequence, read N- to C-terminus: Ribulose bisphosphate carboxylase large chain (477 aa).

A propeptide spanning residues 1–2 (MS) is cleaved from the precursor. Position 3 is an N-acetylproline (Pro3). Lys14 is modified (N6,N6,N6-trimethyllysine). Substrate contacts are provided by Asn123 and Thr173. Lys175 serves as the catalytic Proton acceptor. Lys177 is a substrate binding site. Mg(2+) is bound by residues Lys201, Asp203, and Glu204. At Lys201 the chain carries N6-carboxylysine. His294 functions as the Proton acceptor in the catalytic mechanism. Residues Arg295, His327, and Ser379 each coordinate substrate.

This sequence belongs to the RuBisCO large chain family. Type I subfamily. As to quaternary structure, heterohexadecamer of 8 large chains and 8 small chains; disulfide-linked. The disulfide link is formed within the large subunit homodimers. Mg(2+) is required as a cofactor. The disulfide bond which can form in the large chain dimeric partners within the hexadecamer appears to be associated with oxidative stress and protein turnover.

It localises to the plastid. The protein resides in the chloroplast. It catalyses the reaction 2 (2R)-3-phosphoglycerate + 2 H(+) = D-ribulose 1,5-bisphosphate + CO2 + H2O. The catalysed reaction is D-ribulose 1,5-bisphosphate + O2 = 2-phosphoglycolate + (2R)-3-phosphoglycerate + 2 H(+). Functionally, ruBisCO catalyzes two reactions: the carboxylation of D-ribulose 1,5-bisphosphate, the primary event in carbon dioxide fixation, as well as the oxidative fragmentation of the pentose substrate in the photorespiration process. Both reactions occur simultaneously and in competition at the same active site. The sequence is that of Ribulose bisphosphate carboxylase large chain from Hyophorbe lagenicaulis (Bottle palm).